The primary structure comprises 425 residues: Raffinose permease (425 aa).

The Cytoplasmic segment spans residues 1-11 (MNSASTHKNTD). A helical transmembrane segment spans residues 12 to 32 (FWIFGLFFFLYFFIMATCFPF). The Periplasmic portion of the chain corresponds to 33 to 48 (LPVWLSDVVGLSKTDT). The helical transmembrane segment at 49-69 (GIVFSCLSLFAISFQPLLGVI) threads the bilayer. Topologically, residues 70–78 (SDRLGLKKN) are cytoplasmic. The helical transmembrane segment at 79 to 99 (LIWSISLLLVFFAPFFLYVFA) threads the bilayer. Residues 100-105 (PLLHLN) lie on the Periplasmic side of the membrane. A helical transmembrane segment spans residues 106 to 126 (IWAGALTGGVFIGFVFSAGAG). Residues 127 to 147 (AIEAYIERVSRSSGFEYGKAR) lie on the Cytoplasmic side of the membrane. The chain crosses the membrane as a helical span at residues 148–168 (MFGCLGWALCATMAGILFNVD). Residue proline 169 is a topological domain, periplasmic. The helical transmembrane segment at 170-190 (SLVFWMGSGGALLLLLLLYLA) threads the bilayer. Over 191–229 (RPSTSQTAMVMNALGANSSLISTRMVFSLFRMRQMWMFV) the chain is Cytoplasmic. Residues 230 to 250 (LYTIGVACVYDVFDQQFAIFF) form a helical membrane-spanning segment. The Periplasmic portion of the chain corresponds to 251-265 (RSFFDTPQAGIKAFG). The helical transmembrane segment at 266 to 286 (FATTAGEICNAIIMFCTPWII) threads the bilayer. Over 287 to 294 (NRIGAKNT) the chain is Cytoplasmic. The chain crosses the membrane as a helical span at residues 295 to 315 (LLVAGGIMTIRITGSAFATTM). Position 316 (threonine 316) is a topological domain, periplasmic. The helical transmembrane segment at 317–337 (EVVILKMLHALEVPFLLVGAF) threads the bilayer. Residues 338–351 (KYITGVFDTRLSAT) lie on the Cytoplasmic side of the membrane. The helical transmembrane segment at 352 to 372 (VYLIGFQFSKQLAAILLSTFA) threads the bilayer. The Periplasmic portion of the chain corresponds to 373–383 (GHLYDRMGFQN). Residues 384–404 (TYFVLGMIVLTVTVISAFTLS) form a helical membrane-spanning segment. Over 405–425 (SSPGIVHPSVEKAPVAHSEIN) the chain is Cytoplasmic.

The protein belongs to the major facilitator superfamily. Oligosaccharide:H(+) symporter (OHS) (TC 2.A.1.5) family. Monomer.

The protein localises to the cell inner membrane. In terms of biological role, responsible for transport of raffinose into the cell. Can also transport lactose and melibiose. Has weak activity with maltose. The chain is Raffinose permease from Escherichia coli.